The following is a 194-amino-acid chain: Fibroblast growth factor 7 (194 aa).

The first 31 residues, M1–A31, serve as a signal peptide directing secretion. Residues N45 and N149 are each glycosylated (N-linked (GlcNAc...) asparagine).

This sequence belongs to the heparin-binding growth factors family. As to quaternary structure, interacts with FGFBP1. Interacts with FGFR2. Affinity between fibroblast growth factors (FGFs) and their receptors is increased by heparan sulfate glycosaminoglycans that function as coreceptors.

In terms of biological role, growth factor active on keratinocytes. Possible major paracrine effector of normal epithelial cell proliferation. The protein is Fibroblast growth factor 7 (Fgf7) of Rattus norvegicus (Rat).